The following is a 444-amino-acid chain: MEEEGKKGKKPGIVSPFKRVFLKGEKSRDKKAHEKVTERRPLHTVVLSLPERVEPDRLLSDYIEKEVKYLGQLTSIPGYLNPSSRTEILHFIDNAKRAHQLPGHLTQEHDAVLSLSAYNVKLAWRDGEDIILRVPIHDIAAVSYVRDDAAHLVVLKTAQDPGISPSQSLCAESSRGLSAGSLSESAVGPVEACCLVILAAESKVAAEELCCLLGQVFQVVYTESTIDFLDRAIFDGASTPTHHLSLHSDDSSTKVDIKETYEVEASTFCFPESVDVGGASPHSKTISESELSASATELLQDYMLTLRTKLSSQEIQQFAALLHEYRNGASIHEFCINLRQLYGDSRKFLLLGLRPFIPEKDSQHFENFLETIGVKDGRGIITDSFGRHRRALSTTSSSTTNGNRATGSSDDRSAPSEGDEWDRMISDISSDIEALGCSMDQDSA.

Residues 1–37 (MEEEGKKGKKPGIVSPFKRVFLKGEKSRDKKAHEKVT) are disordered. S15 carries the phosphoserine modification. A compositionally biased stretch (basic and acidic residues) spans 22–37 (LKGEKSRDKKAHEKVT). The 190-residue stretch at 59–248 (LSDYIEKEVK…TPTHHLSLHS (190 aa)) folds into the PID domain. Residue S164 is modified to Phosphoserine. Residues 283-376 (SKTISESELS…NFLETIGVKD (94 aa)) form a harmonin homology domain region. 2 positions are modified to phosphoserine: S384 and S393. The segment at 391–423 (ALSTTSSSTTNGNRATGSSDDRSAPSEGDEWDR) is disordered. Over residues 392 to 408 (LSTTSSSTTNGNRATGS) the composition is skewed to low complexity. Phosphothreonine is present on T394. S396 bears the Phosphoserine mark. T399 is subject to Phosphothreonine.

This sequence belongs to the CCM2 family. In terms of assembly, part of a complex with MAP2K3, MAP3K3 and RAC1. Binds RAC1 directly and independently of its nucleotide-bound state. Interacts with HEG1 and KRIT1; KRIT1 greatly facilitates the interaction with HEG1. Interacts with PDCD10.

It localises to the cytoplasm. Component of the CCM signaling pathway which is a crucial regulator of heart and vessel formation and integrity. May act through the stabilization of endothelial cell junctions. May function as a scaffold protein for MAP2K3-MAP3K3 signaling. Seems to play a major role in the modulation of MAP3K3-dependent p38 activation induced by hyperosmotic shock. The protein is Cerebral cavernous malformations 2 protein (CCM2) of Homo sapiens (Human).